Here is a 121-residue protein sequence, read N- to C-terminus: Large ribosomal subunit protein uL14 (121 aa).

The protein belongs to the universal ribosomal protein uL14 family. In terms of assembly, part of the 50S ribosomal subunit. Forms a cluster with proteins L3 and L19. In the 70S ribosome, L14 and L19 interact and together make contacts with the 16S rRNA in bridges B5 and B8.

In terms of biological role, binds to 23S rRNA. Forms part of two intersubunit bridges in the 70S ribosome. The protein is Large ribosomal subunit protein uL14 of Phocaeicola vulgatus (strain ATCC 8482 / DSM 1447 / JCM 5826 / CCUG 4940 / NBRC 14291 / NCTC 11154) (Bacteroides vulgatus).